The sequence spans 118 residues: Large ribosomal subunit protein bL20 (118 aa).

This sequence belongs to the bacterial ribosomal protein bL20 family.

Binds directly to 23S ribosomal RNA and is necessary for the in vitro assembly process of the 50S ribosomal subunit. It is not involved in the protein synthesizing functions of that subunit. The polypeptide is Large ribosomal subunit protein bL20 (Elusimicrobium minutum (strain Pei191)).